The chain runs to 294 residues: MPQDPRHPEHQYLDLVKHILENGARRMDRTGTGTLSVFGATMRFSLEDNTFPLLTTRRVFYRGVVEELLFFLRGETDSKVLEKKGVRIWEKNGAKQFLQSVGIDREEGDLGPIYGFQWRHFGARYETSASSYEGKGVDQIASAIAAIRANPASRRIVVSAWNPTDLGSMALPPCHVLFQFNVTDGKLSCAMYQRSGDMGLGVPFNIASYSLLTILVAHLTGLQPGEFVHFLGDAHVYLDHVDSLRQQIQRPPRAFPKLFVSPKGPRTEPEHFQYEDFELVGYDPHPAIKMNMSA.

DUMP contacts are provided by residues R29 and 154 to 155 (RR). C174 (nucleophile) is an active-site residue. DUMP is bound by residues 194–197 (RSGD), N205, and 235–237 (HVY). D197 is a binding site for (6R)-5,10-methylene-5,6,7,8-tetrahydrofolate.

It belongs to the thymidylate synthase family.

The catalysed reaction is dUMP + (6R)-5,10-methylene-5,6,7,8-tetrahydrofolate = 7,8-dihydrofolate + dTMP. The protein operates within pyrimidine metabolism; dTTP biosynthesis. The chain is Thymidylate synthase 1/2 (TS-1) from Encephalitozoon cuniculi (strain GB-M1) (Microsporidian parasite).